A 100-amino-acid chain; its full sequence is MDFTVKPRRSLIVYMHSMKQVRQLKRFGLIQYQSRKEHYVVLYMDESQIPAATTKIKKLNFVRRVEPSYRPDVAMNFGERVDQGFFKPTTTGAPDDDDED.

Belongs to the UPF0298 family.

The protein localises to the cytoplasm. The sequence is that of UPF0298 protein lp_2135 from Lactiplantibacillus plantarum (strain ATCC BAA-793 / NCIMB 8826 / WCFS1) (Lactobacillus plantarum).